A 63-amino-acid chain; its full sequence is Actiflagelin (63 aa).

5 disulfides stabilise this stretch: Cys3–Cys24, Cys6–Cys11, Cys17–Cys39, Cys43–Cys55, and Cys56–Cys61. Pro63 is modified (proline amide).

Contains 5 disulfide bonds. In terms of tissue distribution, expressed by the venom gland.

The protein localises to the secreted. Unknown. In vitro, this toxin activates sperm motility when tested on OF1 male mice. This is Actiflagelin from Walterinnesia aegyptia (Desert black snake).